We begin with the raw amino-acid sequence, 275 residues long: Large ribosomal subunit protein uL2 (275 aa).

The segment covering 28–38 (RPYDGLLEKKS) has biased composition (basic and acidic residues). Disordered regions lie at residues 28-58 (RPYDGLLEKKSKSGGRNNNGRITTRHVGGGH) and 223-275 (VAMN…RKAK). A compositionally biased stretch (basic residues) spans 254–275 (KGHKTRKNKRTDKLIVRRRKAK).

The protein belongs to the universal ribosomal protein uL2 family. Part of the 50S ribosomal subunit. Forms a bridge to the 30S subunit in the 70S ribosome.

Functionally, one of the primary rRNA binding proteins. Required for association of the 30S and 50S subunits to form the 70S ribosome, for tRNA binding and peptide bond formation. It has been suggested to have peptidyltransferase activity; this is somewhat controversial. Makes several contacts with the 16S rRNA in the 70S ribosome. The protein is Large ribosomal subunit protein uL2 of Chromohalobacter salexigens (strain ATCC BAA-138 / DSM 3043 / CIP 106854 / NCIMB 13768 / 1H11).